We begin with the raw amino-acid sequence, 436 residues long: Cyclic GMP-AMP synthase (436 aa).

112 to 117 (QGSFQY) contributes to the GTP binding site. Mg(2+)-binding residues include Asp131 and Asp133. Residue Arg182 participates in ATP binding. A Mg(2+)-binding site is contributed by Asp193. Residue Ser259 participates in ATP binding. GTP contacts are provided by Lys287, Ser301, and Asp348. 2 disordered regions span residues 339-358 (RGVESPDSTDEKPLFPPSYK) and 417-436 (AQEPSSASKPEKISSTMVSG). Positions 419 to 436 (EPSSASKPEKISSTMVSG) are enriched in polar residues. Gly436 participates in a covalent cross-link: Glycyl lysine isopeptide (Gly-Lys) (interchain with K-? in acceptor proteins).

The protein belongs to the CD-NTase family. A01 subfamily. Monomer. Interacts with Cap2 in the presence and absence of phage T2. A Cap2 dimer is bound on either side by a DncV monomer. Mg(2+) serves as cofactor. In terms of processing, in bacteria expressing capV-cdnD-cap2, this protein is conjugated to a number of other proteins (by Cap2 via this protein's C-terminal Gly residue), many of which are involved in metabolism. More conjugated protein is found in the absence of Cap3.

It catalyses the reaction GTP + ATP = 3',3'-cGAMP + 2 diphosphate. Its activity is regulated as follows. Primed for activation by Cap2 which conjugates it to cellular proteins; priming is target protein-specific (green fluorescent protein does not activate the enzyme), but which protein(s) activate is unclear. Enzymatic activity of DncV is inhibited by folate-like molecules, such as 5-methyltetrahydrofolate di-glutamate and 5-methyltetrahydrofolate, suggesting the existence of a signaling pathway that links folate-like metabolism cofactors to the regulation of cyclic dinucleotide second messenger synthesis. Lacks a regulatory loop and is constitutively activated. In terms of biological role, cyclic nucleotide synthase (second messenger synthase) of a CBASS antivirus system. CBASS (cyclic oligonucleotide-based antiphage signaling system) provides immunity against bacteriophages. The CD-NTase protein (DncV, this protein) synthesizes cyclic nucleotides in response to infection; these serve as specific second messenger signals. The signals activate a diverse range of effectors, leading to bacterial cell death and thus abortive phage infection. A type II-A(GA) CBASS system. Catalyzes the synthesis of 3',3'-cyclic GMP-AMP (cGAMP), a second messenger in cell signal transduction, from GTP and ATP in response to phage infection. Also able to produce c-di-AMP and c-di-GMP from ATP and GTP, respectively; however, cGAMP is the dominant molecule produced by DncV in vivo, contrary to the 2'3'-cGAMP produced by eukaryotes. Is required for efficient V.cholerae intestinal colonization, and down-regulates the colonization-influencing process of chemotaxis. Is not active with dATP, TTP, UTP or CTP. Its product controls the activity of cGAMP-activated phospholipase CapV, a patatin-like lipase that is a direct cGAMP receptor encoded in the dncV operon. Its function is as follows. Protects E.coli against phage infection. When the CBASS operon (capV-dncV-cap2-cap3) is introduced in E.coli MG1655 there is about 100-fold protection against phages P1 and T2. When the operon is introduced in E.coli MG1655 there is a more than 10(3) decrease in the efficiency of T2 plaque formation. Protects 100-fold against phage T5, offers no protection against T7. When the operon is introduced in E.coli MG1655 it protects against phages T2, T4, T5 and T6. Another paper shows the operon confers protection against phages P1, T2, T5 and T6 but not T4 or lambda. The protein is Cyclic GMP-AMP synthase of Vibrio cholerae serotype O1 (strain ATCC 39315 / El Tor Inaba N16961).